The chain runs to 177 residues: Basic form of pathogenesis-related protein 1 (177 aa).

A signal peptide spans 1-23; it reads MGFLTTIVACFITFAILIHSSKA. Gln24 bears the Pyrrolidone carboxylic acid mark. In terms of domain architecture, SCP spans 31-147; the sequence is LNPHNAARRQ…NGWFFITCNY (117 aa).

It belongs to the CRISP family. In terms of processing, two disulfide bonds are present.

Its function is as follows. Probably involved in the defense reaction of plants against pathogens. This Nicotiana tabacum (Common tobacco) protein is Basic form of pathogenesis-related protein 1.